A 278-amino-acid polypeptide reads, in one-letter code: uncharacterized protein (278 aa).

This is an uncharacterized protein from Escherichia coli (strain K12).